A 134-amino-acid chain; its full sequence is Retinoid-binding protein 7 (134 aa).

The protein belongs to the calycin superfamily. Fatty-acid binding protein (FABP) family. In terms of tissue distribution, expressed primarily in kidney, heart and transverse colon. Detected in adult lymph node, appendix, ascending colon, and in fetal heart and spleen.

Its subcellular location is the cytoplasm. In terms of biological role, intracellular transport of retinol. The polypeptide is Retinoid-binding protein 7 (RBP7) (Homo sapiens (Human)).